We begin with the raw amino-acid sequence, 131 residues long: Profilin (131 aa).

It belongs to the profilin family. As to quaternary structure, occurs in many kinds of cells as a complex with monomeric actin in a 1:1 ratio.

Its subcellular location is the cytoplasm. It is found in the cytoskeleton. In terms of biological role, binds to actin and affects the structure of the cytoskeleton. At high concentrations, profilin prevents the polymerization of actin, whereas it enhances it at low concentrations. By binding to PIP2, it inhibits the formation of IP3 and DG. The chain is Profilin (PRO1) from Cynodon dactylon (Bermuda grass).